Here is a 99-residue protein sequence, read N- to C-terminus: UPF0320 protein YER188C-A (99 aa).

This sequence belongs to the UPF0320 family.

The chain is UPF0320 protein YER188C-A from Saccharomyces cerevisiae (strain ATCC 204508 / S288c) (Baker's yeast).